A 179-amino-acid polypeptide reads, in one-letter code: MSALKEYYTNECVPALKDQLGYTNPMQIPKIEKIVLNMGLGEAVQNPKIVEGAAEELTKIAGQRAVVTKAKKSIATFKLREGMPIGCRVTLRGEKMYDFLSKLVNIALPRVRDFRGVSPKGFDGRGNYSMGIQEQIIFPEIDYDKIDKIKGFNITIVTSAKTNDEGRSLLRLMGMPFKK.

The protein belongs to the universal ribosomal protein uL5 family. As to quaternary structure, part of the 50S ribosomal subunit; part of the 5S rRNA/L5/L18/L25 subcomplex. Contacts the 5S rRNA and the P site tRNA. Forms a bridge to the 30S subunit in the 70S ribosome.

Its function is as follows. This is one of the proteins that bind and probably mediate the attachment of the 5S RNA into the large ribosomal subunit, where it forms part of the central protuberance. In the 70S ribosome it contacts protein S13 of the 30S subunit (bridge B1b), connecting the 2 subunits; this bridge is implicated in subunit movement. Contacts the P site tRNA; the 5S rRNA and some of its associated proteins might help stabilize positioning of ribosome-bound tRNAs. In Desulfotalea psychrophila (strain LSv54 / DSM 12343), this protein is Large ribosomal subunit protein uL5.